The primary structure comprises 86 residues: Co-chaperonin GroES (86 aa).

The protein belongs to the GroES chaperonin family. Heptamer of 7 subunits arranged in a ring. Interacts with the chaperonin GroEL.

The protein localises to the cytoplasm. Functionally, together with the chaperonin GroEL, plays an essential role in assisting protein folding. The GroEL-GroES system forms a nano-cage that allows encapsulation of the non-native substrate proteins and provides a physical environment optimized to promote and accelerate protein folding. GroES binds to the apical surface of the GroEL ring, thereby capping the opening of the GroEL channel. This chain is Co-chaperonin GroES, found in Campylobacter curvus (strain 525.92).